We begin with the raw amino-acid sequence, 771 residues long: UPF0313 protein PSPTO_4928 (771 aa).

Positions 371–649 constitute a Radical SAM core domain; sequence AYDMIRFSVN…KAFLRYHDPK (279 aa). Residues C385, C389, and C392 each contribute to the [4Fe-4S] cluster site. The interval 683–771 is disordered; it reads DTYQSARRKN…KPARKPVVPR (89 aa). 2 stretches are compositionally biased toward basic and acidic residues: residues 726–735 and 745–754; these read KPWDKREEAK and AAKERMDAAK. The span at 756-765 shows a compositional bias: basic residues; that stretch reads GKGKGGKPAR.

The protein belongs to the UPF0313 family. [4Fe-4S] cluster serves as cofactor.

This chain is UPF0313 protein PSPTO_4928, found in Pseudomonas syringae pv. tomato (strain ATCC BAA-871 / DC3000).